The primary structure comprises 350 residues: Protein RecA (350 aa).

Residue 65 to 72 (GPESSGKT) participates in ATP binding. Residues 329–350 (ASPDVKANPVKETEDDMADADI) form a disordered region. A compositionally biased stretch (acidic residues) spans 341–350 (TEDDMADADI).

This sequence belongs to the RecA family.

The protein resides in the cytoplasm. In terms of biological role, can catalyze the hydrolysis of ATP in the presence of single-stranded DNA, the ATP-dependent uptake of single-stranded DNA by duplex DNA, and the ATP-dependent hybridization of homologous single-stranded DNAs. It interacts with LexA causing its activation and leading to its autocatalytic cleavage. This is Protein RecA from Pseudomonas fluorescens (strain ATCC BAA-477 / NRRL B-23932 / Pf-5).